Here is a 65-residue protein sequence, read N- to C-terminus: UPF0434 protein BH12860 (65 aa).

This sequence belongs to the UPF0434 family.

The sequence is that of UPF0434 protein BH12860 from Bartonella henselae (strain ATCC 49882 / DSM 28221 / CCUG 30454 / Houston 1) (Rochalimaea henselae).